Consider the following 609-residue polypeptide: UvrABC system protein C (609 aa).

The GIY-YIG domain occupies 16–94; sequence SSAGVYRMYD…IKQYMPKYNV (79 aa). In terms of domain architecture, UVR spans 203-238; the sequence is QQVISALVDKMELAAERQAYEQAARFRDQIMALRKV.

The protein belongs to the UvrC family. In terms of assembly, interacts with UvrB in an incision complex.

It localises to the cytoplasm. The UvrABC repair system catalyzes the recognition and processing of DNA lesions. UvrC both incises the 5' and 3' sides of the lesion. The N-terminal half is responsible for the 3' incision and the C-terminal half is responsible for the 5' incision. The chain is UvrABC system protein C from Shewanella baltica (strain OS185).